The sequence spans 410 residues: Cysteine desulfurase (410 aa).

Lysine 227 carries the post-translational modification N6-(pyridoxal phosphate)lysine. Residue cysteine 365 is the Cysteine persulfide intermediate of the active site.

Belongs to the class-V pyridoxal-phosphate-dependent aminotransferase family. Csd subfamily. As to quaternary structure, homodimer. Interacts with SufE and the SufBCD complex composed of SufB, SufC and SufD. The interaction with SufE is required to mediate the direct transfer of the sulfur atom from the S-sulfanylcysteine. Pyridoxal 5'-phosphate serves as cofactor.

It localises to the cytoplasm. It carries out the reaction (sulfur carrier)-H + L-cysteine = (sulfur carrier)-SH + L-alanine. The catalysed reaction is L-selenocysteine + AH2 = hydrogenselenide + L-alanine + A + H(+). Its pathway is cofactor biosynthesis; iron-sulfur cluster biosynthesis. Functionally, cysteine desulfurases mobilize the sulfur from L-cysteine to yield L-alanine, an essential step in sulfur metabolism for biosynthesis of a variety of sulfur-containing biomolecules. Component of the suf operon, which is activated and required under specific conditions such as oxidative stress and iron limitation. Acts as a potent selenocysteine lyase in vitro, that mobilizes selenium from L-selenocysteine. Selenocysteine lyase activity is however unsure in vivo. The chain is Cysteine desulfurase from Wigglesworthia glossinidia brevipalpis.